The sequence spans 57 residues: Large ribosomal subunit protein bL32 (57 aa).

The protein belongs to the bacterial ribosomal protein bL32 family.

In Corynebacterium glutamicum (strain R), this protein is Large ribosomal subunit protein bL32.